A 337-amino-acid chain; its full sequence is Ferredoxin--NADP reductase (337 aa).

FAD-binding residues include Asp-33, Gln-41, Tyr-46, Ala-86, Phe-120, Asp-286, and Thr-327.

This sequence belongs to the ferredoxin--NADP reductase type 2 family. In terms of assembly, homodimer. Requires FAD as cofactor.

The enzyme catalyses 2 reduced [2Fe-2S]-[ferredoxin] + NADP(+) + H(+) = 2 oxidized [2Fe-2S]-[ferredoxin] + NADPH. This chain is Ferredoxin--NADP reductase, found in Rickettsia canadensis (strain McKiel).